The primary structure comprises 368 residues: Agmatine deiminase (368 aa).

The active-site Amidino-cysteine intermediate is cysteine 357.

Belongs to the agmatine deiminase family. As to quaternary structure, homodimer.

It carries out the reaction agmatine + H2O = N-carbamoylputrescine + NH4(+). It participates in amine and polyamine biosynthesis; putrescine biosynthesis via agmatine pathway; N-carbamoylputrescine from agmatine: step 1/1. Its function is as follows. Mediates the hydrolysis of agmatine into N-carbamoylputrescine in the arginine decarboxylase (ADC) pathway of putrescine biosynthesis, a basic polyamine. This chain is Agmatine deiminase, found in Ectopseudomonas mendocina (strain ymp) (Pseudomonas mendocina).